Here is a 243-residue protein sequence, read N- to C-terminus: Bidirectional sugar transporter SWEET2a (243 aa).

Topologically, residues 1 to 23 (MDWAAPALTSFVADSSYRHLCCY) are extracellular. A helical transmembrane segment spans residues 24–44 (GAGIAGNVFAFVLFISPLPTF). In terms of domain architecture, MtN3/slv 1 spans 24–111 (GAGIAGNVFA…AVFIAFADAK (88 aa)). The Cytoplasmic segment spans residues 45 to 57 (KRIVRNGSTEQFS). A helical membrane pass occupies residues 58 to 80 (AMPYIYSLLNCLICMWYGLPFVS). The Extracellular segment spans residues 81 to 89 (YGVVLVATV). Residues 90–110 (NSIGAVFQLAYTAVFIAFADA) traverse the membrane as a helical segment. At 111-117 (KQRLKVS) the chain is on the cytoplasmic side. The chain crosses the membrane as a helical span at residues 118–138 (ALLAAVFVVFGLIVFVSLALL). At 139-145 (DHPTRQM) the chain is on the extracellular side. Residues 146-166 (FVGYLSVASLIFMFASPLSII) traverse the membrane as a helical segment. Residues 147–230 (VGYLSVASLI…VLYAYFRKGS (84 aa)) form the MtN3/slv 2 domain. The Cytoplasmic portion of the chain corresponds to 167-179 (NLVIRTKSVEYMP). The helical transmembrane segment at 180–200 (FYLSLSMFLMSASFFGYGVLL) threads the bilayer. Over 201–202 (ND) the chain is Extracellular. Residues 203 to 223 (FFIYIPNGIGTILGIIQLVLY) form a helical membrane-spanning segment. Residues 224–243 (AYFRKGSSEEAKLPLLVTHT) are Cytoplasmic-facing.

This sequence belongs to the SWEET sugar transporter family. As to quaternary structure, forms homooligomers and/or heterooligomers.

The protein resides in the cell membrane. Its function is as follows. Mediates both low-affinity uptake and efflux of sugar across the plasma membrane. The protein is Bidirectional sugar transporter SWEET2a of Sorghum bicolor (Sorghum).